The sequence spans 330 residues: Glycerol-3-phosphate dehydrogenase [NAD(P)+] (330 aa).

NADPH contacts are provided by Ser-10, Trp-11, Arg-31, and Lys-105. Residues Lys-105, Gly-135, and Ser-137 each coordinate sn-glycerol 3-phosphate. Ala-139 is an NADPH binding site. The sn-glycerol 3-phosphate site is built by Lys-190, Asp-243, Ser-253, Arg-254, and Asn-255. Lys-190 (proton acceptor) is an active-site residue. Residue Arg-254 coordinates NADPH. Residues Val-278 and Glu-280 each coordinate NADPH.

Belongs to the NAD-dependent glycerol-3-phosphate dehydrogenase family.

The protein resides in the cytoplasm. The catalysed reaction is sn-glycerol 3-phosphate + NAD(+) = dihydroxyacetone phosphate + NADH + H(+). It carries out the reaction sn-glycerol 3-phosphate + NADP(+) = dihydroxyacetone phosphate + NADPH + H(+). It participates in membrane lipid metabolism; glycerophospholipid metabolism. In terms of biological role, catalyzes the reduction of the glycolytic intermediate dihydroxyacetone phosphate (DHAP) to sn-glycerol 3-phosphate (G3P), the key precursor for phospholipid synthesis. This is Glycerol-3-phosphate dehydrogenase [NAD(P)+] from Solidesulfovibrio magneticus (strain ATCC 700980 / DSM 13731 / RS-1) (Desulfovibrio magneticus).